A 151-amino-acid chain; its full sequence is Probable chemoreceptor glutamine deamidase CheD (151 aa).

This sequence belongs to the CheD family.

The enzyme catalyses L-glutaminyl-[protein] + H2O = L-glutamyl-[protein] + NH4(+). Probably deamidates glutamine residues to glutamate on methyl-accepting chemotaxis receptors (MCPs), playing an important role in chemotaxis. The protein is Probable chemoreceptor glutamine deamidase CheD of Methanosarcina barkeri (strain Fusaro / DSM 804).